We begin with the raw amino-acid sequence, 197 residues long: Nucleoid occlusion factor SlmA (197 aa).

The HTH tetR-type domain occupies 7-67 (INRREHILQC…GLIEFIEESL (61 aa)). A DNA-binding region (H-T-H motif) is located at residues 30-49 (TTAKLAAEVGVSEAALYRHF). A coiled-coil region spans residues 109 to 136 (DALLGENERLRSRISQLFSKIETHLKQI).

The protein belongs to the nucleoid occlusion factor SlmA family. Homodimer. Interacts with FtsZ.

It is found in the cytoplasm. The protein resides in the nucleoid. Required for nucleoid occlusion (NO) phenomenon, which prevents Z-ring formation and cell division over the nucleoid. Acts as a DNA-associated cell division inhibitor that binds simultaneously chromosomal DNA and FtsZ, and disrupts the assembly of FtsZ polymers. SlmA-DNA-binding sequences (SBS) are dispersed on non-Ter regions of the chromosome, preventing FtsZ polymerization at these regions. In Shewanella pealeana (strain ATCC 700345 / ANG-SQ1), this protein is Nucleoid occlusion factor SlmA.